The following is a 593-amino-acid chain: Mitoguardin 2 (593 aa).

The next 2 membrane-spanning stretches (helical) occupy residues 11 to 31 and 42 to 62; these read MIQA…TTFG and PGLR…ALAA. Disordered stretches follow at residues 98-134, 150-171, and 197-229; these read PSVK…HSGS, TAAC…TTDG, and VGQR…PESQ. Low complexity-rich tracts occupy residues 106-116 and 124-134; these read SRRVQSPSSKS and SSIEPSKHSGS. Serine 132 is subject to Phosphoserine. The span at 205–218 shows a compositional bias: polar residues; sequence STPTPGDSLQNPDT. Phosphothreonine is present on threonine 206. Residues serine 220, serine 224, and serine 228 each carry the phosphoserine modification. Threonine 273 carries the post-translational modification Phosphothreonine. Residues serine 276 and serine 295 each carry the phosphoserine modification. The short motif at 292-298 is the FFAT element; that stretch reads SFFSATE.

The protein belongs to the mitoguardin family. Homodimer and heterodimer; forms heterodimers with MIGA1. Interacts with PLD6/MitoPLD. Interacts (via phosphorylated FFAT motif) with MOSPD2. Post-translationally, phosphorylation at Ser-295 of the FFAT motif activates interaction with MOSPD2.

It localises to the mitochondrion outer membrane. Regulator of mitochondrial fusion. Acts by forming homo- and heterodimers at the mitochondrial outer membrane and facilitating the formation of PLD6/MitoPLD dimers. May act by regulating phospholipid metabolism via PLD6/MitoPLD. The protein is Mitoguardin 2 of Mus musculus (Mouse).